Consider the following 363-residue polypeptide: Peptide chain release factor 2 (363 aa).

Gln251 bears the N5-methylglutamine mark.

Belongs to the prokaryotic/mitochondrial release factor family. Methylated by PrmC. Methylation increases the termination efficiency of RF2.

It is found in the cytoplasm. In terms of biological role, peptide chain release factor 2 directs the termination of translation in response to the peptide chain termination codons UGA and UAA. This chain is Peptide chain release factor 2 (prfB), found in Helicobacter pylori (strain ATCC 700392 / 26695) (Campylobacter pylori).